A 329-amino-acid chain; its full sequence is 4-hydroxythreonine-4-phosphate dehydrogenase (329 aa).

The substrate site is built by His136 and Thr137. A divalent metal cation contacts are provided by His166, His211, and His266. Lys274, Asn283, and Arg292 together coordinate substrate.

The protein belongs to the PdxA family. In terms of assembly, homodimer. Zn(2+) is required as a cofactor. Mg(2+) serves as cofactor. Requires Co(2+) as cofactor.

It is found in the cytoplasm. The enzyme catalyses 4-(phosphooxy)-L-threonine + NAD(+) = 3-amino-2-oxopropyl phosphate + CO2 + NADH. It functions in the pathway cofactor biosynthesis; pyridoxine 5'-phosphate biosynthesis; pyridoxine 5'-phosphate from D-erythrose 4-phosphate: step 4/5. In terms of biological role, catalyzes the NAD(P)-dependent oxidation of 4-(phosphooxy)-L-threonine (HTP) into 2-amino-3-oxo-4-(phosphooxy)butyric acid which spontaneously decarboxylates to form 3-amino-2-oxopropyl phosphate (AHAP). In Citrobacter koseri (strain ATCC BAA-895 / CDC 4225-83 / SGSC4696), this protein is 4-hydroxythreonine-4-phosphate dehydrogenase.